A 244-amino-acid chain; its full sequence is MAGHSKWANIKHRKGAQDAARSKIFMKLSKEIFVAASGPGGADPETNPSLRLAVSKAKAQSMPKANIEKALSKASGNSKNASEFKELIYSGSLPGGAIILVICLTDNLNRAISNIKAAFSKIGGQLGKSGSIPYIFERKGVLDILKEEYENSDQLMLEALDAGAEDVQTFEDFSRIITNPSNFQEVKDKIDKALSLENYATAEIQYLPNTTVSFEKEKLEKLETWIETLEDNEDVQEIYHNIDF.

The protein belongs to the TACO1 family.

The protein resides in the cytoplasm. The chain is Probable transcriptional regulatory protein MMOB1910 from Mycoplasma mobile (strain ATCC 43663 / 163K / NCTC 11711) (Mesomycoplasma mobile).